Here is a 794-residue protein sequence, read N- to C-terminus: Protein sel-1 homolog 1 (794 aa).

Residues 1-21 (MQVHVGLTLLLCAVLLSSATA) form the signal peptide. A disordered region spans residues 20-91 (TASSDDESNQ…EEEVSVGEEI (72 aa)). Residues 22 to 737 (SSDDESNQDE…DIFTQLDMDQ (716 aa)) form an interaction with ERLEC1, OS9 and SYVN1 region. Over 22-738 (SSDDESNQDE…IFTQLDMDQL (717 aa)) the chain is Lumenal. Composition is skewed to acidic residues over residues 23–32 (SDDESNQDES) and 62–77 (DSED…EEEE). Serine 63 is modified (phosphoserine). Residues 122-170 (AHGEPCHFPFLFLDKEYDECTSDGRQDGRLWCATTYDYKTDEKWGFCET) enclose the Fibronectin type-II domain. 2 disulfides stabilise this stretch: cysteine 127-cysteine 153 and cysteine 141-cysteine 168. 9 Sel1-like repeats span residues 183 to 218 (AEMI…GMNH), 219 to 254 (TKAL…EEGS), 255 to 290 (PKGQ…LGGN), 291 to 326 (LIAH…NHVA), 373 to 409 (VQAQ…NAGN), 410 to 446 (SHAM…DMGN), 447 to 482 (PVGQ…EQGW), 483 to 518 (VDGQ…QGGH), and 519 to 554 (ILAF…ERGR). 2 N-linked (GlcNAc...) asparagine glycosylation sites follow: asparagine 195 and asparagine 217. N-linked (GlcNAc...) asparagine glycosylation occurs at asparagine 272. Positions 352-537 (NSGMLEEDLI…MHASGTGVMR (186 aa)) are important for homodimerization and oligomerization. Asparagine 431 carries an N-linked (GlcNAc...) asparagine glycan. Asparagine 608 carries N-linked (GlcNAc...) asparagine glycosylation. Sel1-like repeat units lie at residues 627–662 (TVAR…EQQH) and 664–699 (AQAM…EASP). Residues 643–723 (TDVDYETAFI…VVYFLQYIRE (81 aa)) form an interaction with SYVN1 region. The segment at 738 to 794 (LLGPEWDLYLMTIIALLLGTVIAYRQRQHQDVPVPRPPGPWPAPPQQEGPPEQQPPQ) is mediates retention in the endoplasmic reticulum. A helical transmembrane segment spans residues 739-759 (LGPEWDLYLMTIIALLLGTVI). Topologically, residues 760–794 (AYRQRQHQDVPVPRPPGPWPAPPQQEGPPEQQPPQ) are cytoplasmic. The interval 768–794 (DVPVPRPPGPWPAPPQQEGPPEQQPPQ) is disordered. A compositionally biased stretch (pro residues) spans 771 to 794 (VPRPPGPWPAPPQQEGPPEQQPPQ).

Belongs to the sel-1 family. As to quaternary structure, homodimer and homooligomer. May form a complex with ERLEC1, HSPA5, OS9, and SYVN1. Interacts with FOXRED2 and EDEM1. Interacts with LPL and LMF1; may stabilize the complex formed by LPL and LMF1 and thereby promote the export of LPL dimers. Component of the HRD1 complex, which comprises at least SYNV1/HRD1, DERL1/2, FAM8A1, HERPUD1/HERP, OS9, SEL1L and UBE2J1. SYNV1 assembles with SEL1L and FAM8A1 through its transmembrane domains, but interaction with its cytoplasmic domain is required to confer stability to FAM8A1 and enhance recruitment of HERPUD1. The interaction with SYNV1/HRD1 is direct. Post-translationally, N-glycosylated.

The protein localises to the endoplasmic reticulum membrane. Functionally, plays a role in the endoplasmic reticulum quality control (ERQC) system also called ER-associated degradation (ERAD) involved in ubiquitin-dependent degradation of misfolded endoplasmic reticulum proteins. Enhances SYVN1 stability. Plays a role in LPL maturation and secretion. Required for normal differentiation of the pancreas epithelium, and for normal exocrine function and survival of pancreatic cells. May play a role in Notch signaling. The polypeptide is Protein sel-1 homolog 1 (Sel1l) (Mesocricetus auratus (Golden hamster)).